The sequence spans 136 residues: Large ribosomal subunit protein uL16 (136 aa).

The protein belongs to the universal ribosomal protein uL16 family. In terms of assembly, part of the 50S ribosomal subunit.

Functionally, binds 23S rRNA and is also seen to make contacts with the A and possibly P site tRNAs. The sequence is that of Large ribosomal subunit protein uL16 from Yersinia enterocolitica serotype O:8 / biotype 1B (strain NCTC 13174 / 8081).